A 101-amino-acid polypeptide reads, in one-letter code: Class II hydrophobin 5 (101 aa).

A signal peptide spans 1–15 (MQLTALLALATLAIA). Intrachain disulfides connect cysteine 33–cysteine 83, cysteine 44–cysteine 74, cysteine 45–cysteine 57, and cysteine 84–cysteine 95.

The protein belongs to the cerato-ulmin hydrophobin family. As to quaternary structure, homodimer. Homodimers further self-assemble to form highly ordered films at water-air interfaces through intermolecular interactions.

It localises to the secreted. The protein resides in the cell wall. In terms of biological role, aerial growth, conidiation, and dispersal of filamentous fungi in the environment rely upon a capability of their secreting small amphipathic proteins called hydrophobins (HPBs) with low sequence identity. Class I can self-assemble into an outermost layer of rodlet bundles on aerial cell surfaces, conferring cellular hydrophobicity that supports fungal growth, development and dispersal; whereas Class II form highly ordered films at water-air interfaces through intermolecular interactions but contribute nothing to the rodlet structure. The sequence is that of Class II hydrophobin 5 from Trichoderma asperellum (strain ATCC 204424 / CBS 433.97 / NBRC 101777).